Consider the following 114-residue polypeptide: Period circadian protein (114 aa).

Residues 23–114 are disordered; it reads VTNTSIAGTG…VTLTESLLNK (92 aa). Repeat copies occupy residues 30-31, 33-34, 36-37, 38-39, 40-41, 42-43, 44-45, 46-47, 48-49, 50-51, 52-53, 54-55, 56-57, and 58-59. The span at 30-79 shows a compositional bias: gly residues; the sequence is GTGGTGGTGTGTGTGTGTGTGTGTGTGTGTDTGTGTGTGTETGTGTGTGT. The 28 X 2 AA approximate tandem repeats of G-[TN] stretch occupies residues 30-87; it reads GTGGTGGTGTGTGTGTGTGTGTGTGTGTGTDTGTGTGTGTETGTGTGTGTRNGTNSGT. The stretch at 60–61 is one 15; approximate repeat; that stretch reads DT. A run of 4 repeats spans residues 62–63, 64–65, 66–67, and 68–69. A 20; approximate repeat occupies 70 to 71; it reads ET. 4 tandem repeats follow at residues 72–73, 74–75, 76–77, and 78–79. Residues 80–81 form a 25; approximate repeat; that stretch reads RN. The segment covering 80–91 has biased composition (low complexity); that stretch reads RNGTNSGTKTGT. Repeat unit 26 spans residues 82-83; it reads GT. A 27; approximate repeat occupies 84 to 85; sequence NS. Copy 28 of the repeat occupies 86–87; that stretch reads GT. Residues 105–114 show a composition bias toward polar residues; it reads VTLTESLLNK.

Forms a heterodimer with timeless (TIM); the complex then translocates into the nucleus. Phosphorylated with a circadian rhythmicity, probably by the double-time protein (dbt). Phosphorylation could be implicated in the stability of per monomer and in the formation of heterodimer per-tim.

The protein resides in the nucleus. It is found in the cytoplasm. Its subcellular location is the perinuclear region. Its function is as follows. Essential for biological clock functions. Determines the period length of circadian and ultradian rhythms; an increase in PER dosage leads to shortened circadian rhythms and a decrease leads to lengthened circadian rhythms. Essential for the circadian rhythmicity of locomotor activity, eclosion behavior, and for the rhythmic component of the male courtship song that originates in the thoracic nervous system. The biological cycle depends on the rhythmic formation and nuclear localization of the TIM-PER complex. Light induces the degradation of TIM, which promotes elimination of PER. Nuclear activity of the heterodimer coordinatively regulates PER and TIM transcription through a negative feedback loop. Behaves as a negative element in circadian transcriptional loop. Does not appear to bind DNA, suggesting indirect transcriptional inhibition. This is Period circadian protein (per) from Drosophila orena (Fruit fly).